Consider the following 757-residue polypeptide: MNLSGSSCGSPSSADVSNDFKDLWTKLKEYHDKETQGLQVKVTKLKKERILDAQRLEEFFTKNQQLREQQKVLHETIKVLEDRLRAGLCDRCAVTEEHMRKKQQEFENIRQQNLKLITELMNEKNTLQEENKKLSEQLQQKIENDQPHKATDLESEEDVIPDSPITTFSFSGTNRLRRKENLRVRYIEQTHAKLEHSGCAHELRTVPKSSAHPQHKPKESEILVADTCDQSQAPVAKPHGKSSYTPDNLATVVAETLGLCVQEESESRGPQSPLGDELYHCLEGDHKKQAFEECRRNSEDNLRFSDSKTPFQEELTTRVSSPVFGAPSNVKSSLGLNTSLSPSLLETGKKTHLKTVPLSNTSAPGPEKPRSKSEDGTLITHHHLGTEVNKIPSQSSSNKQMLINKNTSEPISEQGNIGHSKDTDRDKHVVPLKSLGGRTKRKKIEEESEDEVICPQASFDKENAFPFPLDSHSSMNGDYVMDKPLDLSDRFSAIQRQEKSQGCENSKIRFRQVTLYEALKPIPRDSSSSRKALSGSCGLTKDSPEEPCLQESLFQSLSKSPDNKTLLQIKEENPVFKIPLRPRESFETENLFDDTKGAGSHEPIKIKTRSVRGACEVASVLQLNPCRIAKTKSLQNNQDVSFENIQWSIDPGADLSQYKMGVTVDDTKDGSQSRLAGETVDMDCTLVSETMLLKLKKQEQKGEESPNGERKMNDSLEDMFDRTTHEEYESCLAESFPQVADEEKELSTTTKKPNISW.

Residues 22 to 45 are essential for binding to the MRN complex and for RPA focus formation on DNA damage; the sequence is DLWTKLKEYHDKETQGLQVKVTKL. Residues 35–84 adopt a coiled-coil conformation; the sequence is TQGLQVKVTKLKKERILDAQRLEEFFTKNQQLREQQKVLHETIKVLEDRL. The interval 45-160 is required for interaction with LMO4, probably by stabilizing the interaction through RPPB8 dimerization; that stretch reads LKKERILDAQ…TDLESEEDVI (116 aa). Residues Lys62 and Lys115 each participate in a glycyl lysine isopeptide (Lys-Gly) (interchain with G-Cter in SUMO2) cross-link. A coiled-coil region spans residues 117 to 138; the sequence is ITELMNEKNTLQEENKKLSEQL. Residue Lys193 forms a Glycyl lysine isopeptide (Lys-Gly) (interchain with G-Cter in SUMO2) linkage. Ser272 bears the Phosphoserine mark. At Thr309 the chain carries Phosphothreonine. Phosphoserine is present on residues Ser320, Ser321, and Ser343. The disordered stretch occupies residues 348 to 375; the sequence is GKKTHLKTVPLSNTSAPGPEKPRSKSED. Glycyl lysine isopeptide (Lys-Gly) (interchain with G-Cter in SUMO2) cross-links involve residues Lys354 and Lys372. A Phosphoserine modification is found at Ser373. Glycyl lysine isopeptide (Lys-Gly) (interchain with G-Cter in SUMO2) cross-links involve residues Lys390, Lys399, and Lys405. The segment covering 407 to 417 has biased composition (polar residues); it reads TSEPISEQGNI. Residues 407–430 are disordered; it reads TSEPISEQGNIGHSKDTDRDKHVV. Residues 419–429 are compositionally biased toward basic and acidic residues; that stretch reads HSKDTDRDKHV. Glycyl lysine isopeptide (Lys-Gly) (interchain with G-Cter in SUMO2) cross-links involve residues Lys433 and Lys443. Residues 484–488 are PXDLS motif; the sequence is PLDLS. Positions 484 to 488 match the PXDLS motif motif; the sequence is PLDLS. A damage-recruitment motif region spans residues 503–551; that stretch reads CENSKIRFRQVTLYEALKPIPRDSSSSRKALSGSCGLTKDSPEEPCLQE. A Glycyl lysine isopeptide (Lys-Gly) (interchain with G-Cter in SUMO2); alternate cross-link involves residue Lys520. Positions 524–544 are disordered; it reads RDSSSSRKALSGSCGLTKDSP. Glycyl lysine isopeptide (Lys-Gly) (interchain with G-Cter in SUMO2) cross-links involve residues Lys564 and Lys570. Residue Lys596 forms a Glycyl lysine isopeptide (Lys-Gly) (interchain with G-Cter in SUMO2); alternate linkage. Glycyl lysine isopeptide (Lys-Gly) (interchain with G-Cter in SUMO2) cross-links involve residues Lys605, Lys630, and Lys632. The required for interaction with LMO4, probably by making physical contact with LMO4 stretch occupies residues 633 to 677; it reads SLQNNQDVSFENIQWSIDPGADLSQYKMGVTVDDTKDGSQSRLAG. The residue at position 656 (Ser656) is a Phosphoserine; by ATM. Lys668 participates in a covalent cross-link: Glycyl lysine isopeptide (Lys-Gly) (interchain with G-Cter in SUMO2). Ser671 carries the post-translational modification Phosphoserine. A compositionally biased stretch (basic and acidic residues) spans 696-728; the sequence is KKQEQKGEESPNGERKMNDSLEDMFDRTTHEEY. The disordered stretch occupies residues 696-757; sequence KKQEQKGEES…TTTKKPNISW (62 aa). Lys711 participates in a covalent cross-link: Glycyl lysine isopeptide (Lys-Gly) (interchain with G-Cter in SUMO2). Position 715 is a phosphoserine (Ser715). Residues 747–757 show a composition bias toward polar residues; that stretch reads STTTKKPNISW.

This sequence belongs to the COM1/SAE2/CtIP family. Homotetramer; formed by antiparallel association of helical extensions protruding from the N-termini of two parallel coiled-coil dimers. Forms a dumbbell-shaped particle in which polar globular domains are held about 30 nm apart by a central rod. Homotetramerization is required for DNA-end resection and repair. Interacts (via the PXDLS motif) with CTBP1; the interaction is disrupted via binding of the adenovirus E1A to CTBP1. Component of the BRCA1-RBBP8 complex. Interacts (the Ser-321 phosphorylated form) with BRCA1 (via the C-terminal BRCT domains): the interaction occurs in the G2 phase, ubiquitinates RBBP8 and involves RBBP8 in BRCA1-dependent G2/M checkpoint control on DNA damage. Interacts with RB1. Interacts with the MRN complex. Interacts directly with MRE11; the interaction is required for efficient homologous recombination (HR) and regulation of the MRN complex. Interacts directly with RAD50. Interacts (when phosphorylated by CDK1) with NBN; promoting association with the MRN complex. Interacts with LMO4 (via the LIM zinc-binding 1 domain). Interacts with SIAH1. Interacts with RNF138. Interacts with EXD2. Interacts with CUL3 and KLHL15; this interaction leads to RBBP8 proteasomal degradation. Directly interacts with PIN1; this interaction depends upon RBBP8 phosphorylation, predominantly at Thr-309. Interacts with FZR1; this interaction leads to APC/C-mediated RBBP8 proteasomal degradation. Interacts with AUNIP; leading to recruit RBBP8 to sites of DNA damage. Interacts with SAMHD1. Interacts with HDGFL2. Hyperphosphorylation upon ionizing radiation results in dissociation from BRCA1. Phosphorylation by CDK1 is essential for the recruitment to DNA and the DNA repair function. Phosphorylated on Ser-321 as cells enter G2 phase. This phosphorylation is required for binding BRCA1 and for the G2/M DNA damage transition checkpoint control. Phosphorylation at Thr-309, probably catalyzed by CDK2, is required for PIN1-binding, while phosphorylation at Ser-272 serves as a PIN1 isomerization site. Phosphorylation at Thr-309 is cell-cycle dependent. It steadily increases during S phase, peaks at late S/G2 phase, and drops at G1. Phosphorylation is not required for tetramerization. Binds to DNA more strongly when dephosphorylated. In terms of processing, ubiquitinated. Ubiquitination at multiple sites by BRCA1 (via its N-terminal RING domain) does not lead to its proteasomal degradation but instead the ubiquitinated RBBP8 binds to chromatin following DNA damage and may play a role in G2/M checkpoint control. Ubiquitinated by RNF138 at its N-terminus. Ubiquitinated through 'Lys-48' by the E3 CUL3-KLHL15 complex; this modification leads to proteasomal degradation. Ubiquitinated by the E3 FZR1/APC/C complex; this modification leads to proteasomal degradation.

It localises to the nucleus. The protein resides in the chromosome. Its function is as follows. Endonuclease that cooperates with the MRE11-RAD50-NBN (MRN) complex in DNA-end resection, the first step of double-strand break (DSB) repair through the homologous recombination (HR) pathway. HR is restricted to S and G2 phases of the cell cycle and preferentially repairs DSBs resulting from replication fork collapse. Key determinant of DSB repair pathway choice, as it commits cells to HR by preventing classical non-homologous end-joining (NHEJ). Specifically promotes the endonuclease activity of the MRN complex to clear DNA ends containing protein adducts: recruited to DSBs by NBN following phosphorylation by CDK1, and promotes the endonuclease activity of MRE11 to clear protein-DNA adducts and generate clean double-strand break ends. Functions downstream of the MRN complex and ATM, promotes ATR activation and its recruitment to DSBs in the S/G2 phase facilitating the generation of ssDNA. Component of the BRCA1-RBBP8 complex that regulates CHEK1 activation and controls cell cycle G2/M checkpoints on DNA damage. During immunoglobulin heavy chain class-switch recombination, promotes microhomology-mediated alternative end joining (A-NHEJ) and plays an essential role in chromosomal translocations. Binds preferentially to DNA Y-junctions and to DNA substrates with blocked ends and promotes intermolecular DNA bridging. This is DNA endonuclease RBBP8 (RBBP8) from Bos taurus (Bovine).